The following is a 407-amino-acid chain: Phosphopentomutase (407 aa).

Asp-10, Asp-306, His-311, Asp-347, His-348, and His-359 together coordinate Mn(2+).

It belongs to the phosphopentomutase family. It depends on Mn(2+) as a cofactor.

The protein localises to the cytoplasm. The enzyme catalyses 2-deoxy-alpha-D-ribose 1-phosphate = 2-deoxy-D-ribose 5-phosphate. It carries out the reaction alpha-D-ribose 1-phosphate = D-ribose 5-phosphate. Its pathway is carbohydrate degradation; 2-deoxy-D-ribose 1-phosphate degradation; D-glyceraldehyde 3-phosphate and acetaldehyde from 2-deoxy-alpha-D-ribose 1-phosphate: step 1/2. Its function is as follows. Isomerase that catalyzes the conversion of deoxy-ribose 1-phosphate (dRib-1-P) and ribose 1-phosphate (Rib-1-P) to deoxy-ribose 5-phosphate (dRib-5-P) and ribose 5-phosphate (Rib-5-P), respectively. The sequence is that of Phosphopentomutase from Serratia proteamaculans (strain 568).